A 572-amino-acid polypeptide reads, in one-letter code: Secreted triacylglycerol lipase LIP6 (572 aa).

Residues 1–23 (MYSTSLLRWLVVALVSAVPLVTA) form the signal peptide. A disulfide bridge links cysteine 117 with cysteine 291. The active-site Nucleophile is serine 202. The active site involves aspartate 351. A glycan (N-linked (GlcNAc...) asparagine) is linked at asparagine 360. The active site involves histidine 385. The disordered stretch occupies residues 468–572 (KGGVWNDVLK…SSRRHVARFM (105 aa)). Over residues 491 to 511 (PESKKATKKYKSESKAEKKQP) the composition is skewed to basic and acidic residues. Positions 512–525 (DSIPSSSSKSSSDN) are enriched in low complexity. Asparagine 525 carries an N-linked (GlcNAc...) asparagine glycan. Basic residues predominate over residues 528–540 (AHAKYHAHGHGHG). Positions 541–562 (HASSNSNNGHSHSAKESSTSKG) are enriched in low complexity. Positions 563–572 (SSRRHVARFM) are enriched in basic residues.

It belongs to the AB hydrolase superfamily. Lipase family. Class Lip subfamily.

Its subcellular location is the secreted. The protein resides in the cell wall. The catalysed reaction is a triacylglycerol + H2O = a diacylglycerol + a fatty acid + H(+). It catalyses the reaction a monoacylglycerol + H2O = glycerol + a fatty acid + H(+). The enzyme catalyses a diacylglycerol + H2O = a monoacylglycerol + a fatty acid + H(+). Secreted lipase involved in Dandruff and seborrheic dermatitis (D/SD) probably via lipase-mediated breakdown of sebaceous lipids and release of irritating free fatty acids. Shows only minimal activity against triolein. Mostly converts monoolein to di- and triolein, while free fatty acids are only produced in low amounts. The polypeptide is Secreted triacylglycerol lipase LIP6 (Malassezia globosa (strain ATCC MYA-4612 / CBS 7966) (Dandruff-associated fungus)).